We begin with the raw amino-acid sequence, 140 residues long: DegV domain-containing 15.5 kDa protein (140 aa).

In terms of domain architecture, DegV spans 4-140 (QIIVTDSTSD…ELVLLQSKKI (137 aa)). Residues Thr61 and Ser93 each contribute to the hexadecanoate site.

Functionally, may bind long-chain fatty acids, such as palmitate, and may play a role in lipid transport or fatty acid metabolism. This chain is DegV domain-containing 15.5 kDa protein, found in Staphylococcus aureus.